Here is a 235-residue protein sequence, read N- to C-terminus: Myelin protein zero-like protein 3 (235 aa).

Residues 1–31 form the signal peptide; it reads MQQRGAAGSRGCALFPLLGVLFFQGVYIVFS. The region spanning 32 to 148 is the Ig-like V-type domain; that stretch reads LEIRADAHVR…NIPMTELTVT (117 aa). The Extracellular segment spans residues 32–158; that stretch reads LEIRADAHVR…ERGFGTMLSS (127 aa). Cysteine 52 and cysteine 128 form a disulfide bridge. The N-linked (GlcNAc...) asparagine glycan is linked to asparagine 123. Residues 159–179 traverse the membrane as a helical segment; that stretch reads VALLSILVFVPSAVVVALLLV. The Cytoplasmic portion of the chain corresponds to 180–235; sequence RMGRKAAGLKKRSRSGYKKSSIEVSDDTDQEEEEACMARLCVRCAECLDSDYEETY.

This sequence belongs to the myelin P0 protein family.

The protein resides in the membrane. Its function is as follows. Mediates homophilic cell-cell adhesion. The chain is Myelin protein zero-like protein 3 (MPZL3) from Homo sapiens (Human).